Reading from the N-terminus, the 323-residue chain is Conjugal transfer protein TrbB (323 aa).

An ATP-binding site is contributed by 151–158 (GGTGSGKT).

It belongs to the GSP E family.

The protein localises to the cytoplasm. This chain is Conjugal transfer protein TrbB (trbB), found in Rhizobium radiobacter (Agrobacterium tumefaciens).